The primary structure comprises 450 residues: Divalent metal cation transporter MntH (450 aa).

11 consecutive transmembrane segments (helical) span residues 34–54, 61–81, 108–128, 141–161, 170–190, 212–232, 263–283, 305–325, 361–381, 383–403, and 422–442; these read LSFL…GNWI, AQYG…AMLL, IAII…IAEV, IPLI…LFIM, AIVG…VYIS, GILY…NLYL, IQLS…ASLF, PVLG…ALLA, SLAV…AAKI, QLLV…LIPL, and VNII…YLIV.

Belongs to the NRAMP family.

It localises to the cell membrane. In terms of biological role, h(+)-stimulated, divalent metal cation uptake system. This is Divalent metal cation transporter MntH from Staphylococcus aureus (strain Mu3 / ATCC 700698).